We begin with the raw amino-acid sequence, 630 residues long: Glutathione hydrolase proenzyme 1 (630 aa).

Residues Met1–Ser49 are Cytoplasmic-facing. A helical; Signal-anchor for type II membrane protein transmembrane segment spans residues Ile50–Leu70. The Lumenal portion of the chain corresponds to Ser71–Tyr630. Residue Asn156 is glycosylated (N-linked (GlcNAc...) asparagine). Arg165 serves as a coordination point for L-glutamate. Residues Asn180, Asn315, Asn397, and Asn417 are each glycosylated (N-linked (GlcNAc...) asparagine). The Nucleophile role is filled by Thr441. L-glutamate contacts are provided by residues Ser459, Asn461, Asp483, Ser511 to Ser512, and Gly532 to Gly533. Asn612 is a glycosylation site (N-linked (GlcNAc...) asparagine).

This sequence belongs to the gamma-glutamyltransferase family. In terms of assembly, heterodimer composed of the light and heavy chains. The active site is located in the light chain. Cleaved by autocatalysis into a large and a small subunit.

The protein localises to the endoplasmic reticulum membrane. The enzyme catalyses an N-terminal (5-L-glutamyl)-[peptide] + an alpha-amino acid = 5-L-glutamyl amino acid + an N-terminal L-alpha-aminoacyl-[peptide]. It catalyses the reaction glutathione + H2O = L-cysteinylglycine + L-glutamate. The catalysed reaction is an S-substituted glutathione + H2O = an S-substituted L-cysteinylglycine + L-glutamate. Its pathway is sulfur metabolism; glutathione metabolism. Catalyzes the transfer of the gamma-glutamyl moiety of glutathione (GSH) and other gamma-glutamyl compounds to amino acids and peptides. Major GSH-degrading enzyme, catalyzing the hydrolytic release of L-glutamate from GSH. The sequence is that of Glutathione hydrolase proenzyme 1 (ggt1) from Schizosaccharomyces pombe (strain 972 / ATCC 24843) (Fission yeast).